The chain runs to 101 residues: Protein mes1 (101 aa).

Over residues 1–19 (MVNTDNKENEPPNMEKAHM) the composition is skewed to basic and acidic residues. The interval 1 to 101 (MVNTDNKENE…RSPNPLLSMR (101 aa)) is disordered.

In terms of assembly, interacts with slp1.

The protein resides in the cytoplasm. It localises to the nucleus. Functionally, specifically required for meiosis II (MII). Binds to slp1, an activator of the anapahase promoting complex/cyclcosome (APC/C), and counteracts its function in promoting proteolysis of cdc13. By suppressing the degradation of cdc13 at anaphase I this protein may help maintain a sufficient level of cdc2 kinase activity to complete MII. This chain is Protein mes1 (mes1), found in Schizosaccharomyces pombe (strain 972 / ATCC 24843) (Fission yeast).